The following is a 497-amino-acid chain: MNSLIPPPTSEQQMNMFRLRDKMSLLNAEFLKVINGYFTEKNHYDFSGTMKSYMDHVAQLKQIYKVDDDVAADMTVPRRTENSSESSGETVAPRKIAKAVRKNGTPKNPLNSTVFAASSPAATVASVPKFGDISVITKETPAPLAKTAEPLVAPAAPATARKRAIRGGGPLGGAESVVFKSGEDGQAATSSVKIPATTIKFPEPTKDFWTKKSDAPAAPSNSGSLFAFLGKDGDKPKETPKFSGFSFGKKPAEPSEEPKAADSTPKLTFGSPKEADLPKPASSLFGASPSKPLVFGGSSADSTTSAPKPFSALSTAASLFGSSSASTTTTATQPLSFGSSSTGGSSLFSGFAGLAQKAMENQNQAKPEGSGEDDEGEYVPPKVETVENQEPDAVLSSKVSVFKFTGKEYTKLGVGMLHIKDNDGKFSVLIRAATATGTVWLNSLCNKAMKATVVDAKGDRIRLTCPSSSTEMATMMIRFGTADGAKKFTDKILEVAV.

Disordered regions lie at residues 76-95 (VPRR…APRK), 210-308 (TKKS…SAPK), and 359-379 (MENQ…GEYV). 2 stretches are compositionally biased toward basic and acidic residues: residues 231 to 240 (KDGDKPKETP) and 250 to 260 (KPAEPSEEPKA). The tract at residues 390 to 497 (EPDAVLSSKV…FTDKILEVAV (108 aa)) is ranBD1.

As to quaternary structure, interacts with importin beta imb-1. Interacts with DNA-directed RNA polymerase III subunit rpc-1. Interacts with TATA-box-binding protein tbp-1. Interacts with GTF3C5 homolog tftc-5. Interacts with GTF3C3 homolog tftc-3.

The protein resides in the nucleus. The protein localises to the nuclear pore complex. Its subcellular location is the nucleus membrane. In terms of biological role, component of the nuclear pore complex. Plays a direct role in nuclear protein import. Required for anoxia-induced prophase arrest; may function in concert with cdk-1 to arrest prophase blastomeres in response to anoxia. This is Nuclear pore complex protein npp-16 from Caenorhabditis elegans.